Here is an 822-residue protein sequence, read N- to C-terminus: Molybdenum cofactor sulfurase (822 aa).

K245 is subject to N6-(pyridoxal phosphate)lysine. C412 is a catalytic residue. An MOSC domain is found at 658-814 (LRLIRQSSND…LKTYSPIKAI (157 aa)).

It belongs to the class-V pyridoxal-phosphate-dependent aminotransferase family. MOCOS subfamily. Pyridoxal 5'-phosphate serves as cofactor.

The enzyme catalyses Mo-molybdopterin + L-cysteine + AH2 = thio-Mo-molybdopterin + L-alanine + A + H2O. Its pathway is cofactor biosynthesis; molybdopterin biosynthesis. Its function is as follows. Sulfurates the molybdenum cofactor. Sulfation of molybdenum is essential for xanthine dehydrogenase (XDH) and aldehyde oxidase (ADO) enzymes in which molybdenum cofactor is liganded by 1 oxygen and 1 sulfur atom in active form. This Bombyx mori (Silk moth) protein is Molybdenum cofactor sulfurase.